The sequence spans 56 residues: MFTVFLLVVLATTVVSFTSDRASDSRKDAASGLIALTIKGCCSDPRCNMNNPDYCG.

A signal peptide spans 1–16 (MFTVFLLVVLATTVVS). Residues 17 to 39 (FTSDRASDSRKDAASGLIALTIK) constitute a propeptide that is removed on maturation. Intrachain disulfides connect Cys-41/Cys-47 and Cys-42/Cys-55. Residues 43–45 (SDP) are ser-Xaa-Pro motif, crucial for potent interaction with nAChR. Tyr-54 bears the Sulfotyrosine mark. The residue at position 55 (Cys-55) is a Cysteine amide.

This sequence belongs to the conotoxin A superfamily. In terms of processing, both tyrosine sulfation and C-terminal amidation are important for activity and structure stability. In terms of tissue distribution, expressed by the venom duct.

It localises to the secreted. Functionally, alpha-conotoxins act on postsynaptic membranes, they bind to the nicotinic acetylcholine receptors (nAChR) and thus inhibit them. This native peptide blocks mammalian nicotinic acetylcholine receptors composed of alpha-3-beta-2/CHRNA3-CHRNB2 and alpha-3-beta-4/CHRNA3-CHRNB4 subunits. The sequence is that of Alpha-conotoxin EpI from Conus episcopatus (Bishop's cone).